The sequence spans 575 residues: Acyloxyacyl hydrolase (575 aa).

The signal sequence occupies residues 1–23; sequence MQSPWKILTVAPLFLLLSLQSSA. Residues 24 to 34 constitute a propeptide that is removed on maturation; it reads SPANDDQSRPS. In terms of domain architecture, Saposin B-type spans 37–118; that stretch reads NGHTCVGCVL…HTLEFCKQNT (82 aa). The interval 38–70 is important for enzyme activity, localization to cytoplasmic vesicles, and protein stability; the sequence is GHTCVGCVLVVSVIEQLAQVHNSTVQASMERLC. Cystine bridges form between C41–C114, C44–C108, C70–C83, C123–C453, C160–C169, C206–C230, C249–C329, and C376–C459. N-linked (GlcNAc...) asparagine glycosylation occurs at N59. The lipopolysaccharide binding stretch occupies residues 173-177; the sequence is KLAME. Residues D184, D186, D188, Y190, D205, N207, D208, D210, V213, D223, D227, N229, N231, I233, and E245 each coordinate Ca(2+). N-linked (GlcNAc...) asparagine glycosylation occurs at N207. S263 is a catalytic residue. 2 N-linked (GlcNAc...) asparagine glycosylation sites follow: N409 and N466.

As to quaternary structure, heterodimer of the large and small subunits; disulfide-linked. Requires Ca(2+) as cofactor. Cleaved into a large and a small subunit. In terms of processing, the small subunit is N-glycosylated.

The protein localises to the secreted. It localises to the cytoplasmic vesicle. The enzyme catalyses a 3-(acyloxy)acyl derivative of bacterial toxin + H2O = a 3-hydroxyacyl derivative of bacterial toxin + a fatty acid + H(+). With respect to regulation, inhibited by EDTA. Its function is as follows. Removes the secondary (acyloxyacyl-linked) fatty acyl chains from the lipid A region of bacterial lipopolysaccharides. By breaking down LPS, terminates the host response to bacterial infection and prevents prolonged and damaging inflammatory responses. In peritoneal macrophages, seems to be important for recovery from a state of immune tolerance following infection by Gram-negative bacteria. The chain is Acyloxyacyl hydrolase from Homo sapiens (Human).